Here is a 561-residue protein sequence, read N- to C-terminus: Sperm-tail PG-rich repeat-containing protein 2 (561 aa).

STPGR repeat units lie at residues 21-34, 63-72, and 97-104; these read VGPG…PKQQ, PGPAHYNVSQ, and GPGPGSYN. Residues 123-143 are disordered; the sequence is PAVSRNIDIPSIPSSGKSHGY. STPGR repeat units lie at residues 164–191, 200–210, 250–285, 292–299, 334–367, 421–438, and 471–481; these read GPAY…NATG, GPGPGQYDIIQ, PGPG…TERF, TPAPGTYN, LPGP…FGSS, LPAP…MSQV, and GPGPATYSPVL.

The polypeptide is Sperm-tail PG-rich repeat-containing protein 2 (Stpg2) (Mus musculus (Mouse)).